The sequence spans 333 residues: MTSVRRAKITALGTYVPPRVLSNFDLEKMVDTTNQWILERTGIRERHLVDKGVAASDLAVEAAKKCLANRGIEAAEVECIVVGTVTPDMMYPSTACLVQHKLGIPNAWGFDVSAGCSGFLFSLTTGAKFIESGQYKKVLVIGSDVNSSMIDYTDRATCIIFGDGAGAVLLEPTEDGEDVGVMDHIHQVEGVGGQYLYMPGGGSLNPASHETIDQKMHYVHQDGQNVFKYAVKKMSEMTEKVLKRNSLTGTDVDCFIAHQANKRIIVATAERLKMPMEKVIINIEKYGNTTAGTIPLAMQTALDEGKLKKGSNVLLAAVGAGFTSGATLLRWAF.

Catalysis depends on residues Cys-116 and His-258. The ACP-binding stretch occupies residues 259–263; that stretch reads QANKR. The active site involves Asn-288.

The protein belongs to the thiolase-like superfamily. FabH family. As to quaternary structure, homodimer.

The protein localises to the cytoplasm. The enzyme catalyses malonyl-[ACP] + acetyl-CoA + H(+) = 3-oxobutanoyl-[ACP] + CO2 + CoA. The protein operates within lipid metabolism; fatty acid biosynthesis. Functionally, catalyzes the condensation reaction of fatty acid synthesis by the addition to an acyl acceptor of two carbons from malonyl-ACP. Catalyzes the first condensation reaction which initiates fatty acid synthesis and may therefore play a role in governing the total rate of fatty acid production. Possesses both acetoacetyl-ACP synthase and acetyl transacylase activities. Its substrate specificity determines the biosynthesis of branched-chain and/or straight-chain of fatty acids. This is Beta-ketoacyl-[acyl-carrier-protein] synthase III from Koribacter versatilis (strain Ellin345).